The sequence spans 29 residues: Glucagon (29 aa).

This sequence belongs to the glucagon family.

The protein resides in the secreted. Its function is as follows. Glucagon plays a key role in glucose metabolism and homeostasis. Regulates blood glucose by increasing gluconeogenesis and decreasing glycolysis. The protein is Glucagon (gcg) of Lampetra fluviatilis (European river lamprey).